A 460-amino-acid polypeptide reads, in one-letter code: Bifunctional protein GlmU (460 aa).

The tract at residues 1 to 229 (MSKLNIVVLA…VWETTGVNSK (229 aa)) is pyrophosphorylase. UDP-N-acetyl-alpha-D-glucosamine-binding positions include 9–12 (LAAG), K23, Q74, 79–80 (GT), 101–103 (YGD), G138, E154, N169, and N227. D103 lines the Mg(2+) pocket. Mg(2+) is bound at residue N227. Positions 230–250 (VQLAGLERIYQTAQANKLLEQ) are linker. The segment at 251 to 460 (GVALADPARI…RPVKKPKPKN (210 aa)) is N-acetyltransferase. The UDP-N-acetyl-alpha-D-glucosamine site is built by R333 and K351. The active-site Proton acceptor is the H363. UDP-N-acetyl-alpha-D-glucosamine-binding residues include Y366 and N377. Acetyl-CoA-binding positions include A380, 386–387 (NY), S405, A423, and R440.

It in the N-terminal section; belongs to the N-acetylglucosamine-1-phosphate uridyltransferase family. The protein in the C-terminal section; belongs to the transferase hexapeptide repeat family. As to quaternary structure, homotrimer. Mg(2+) serves as cofactor.

It localises to the cytoplasm. It catalyses the reaction alpha-D-glucosamine 1-phosphate + acetyl-CoA = N-acetyl-alpha-D-glucosamine 1-phosphate + CoA + H(+). The catalysed reaction is N-acetyl-alpha-D-glucosamine 1-phosphate + UTP + H(+) = UDP-N-acetyl-alpha-D-glucosamine + diphosphate. Its pathway is nucleotide-sugar biosynthesis; UDP-N-acetyl-alpha-D-glucosamine biosynthesis; N-acetyl-alpha-D-glucosamine 1-phosphate from alpha-D-glucosamine 6-phosphate (route II): step 2/2. The protein operates within nucleotide-sugar biosynthesis; UDP-N-acetyl-alpha-D-glucosamine biosynthesis; UDP-N-acetyl-alpha-D-glucosamine from N-acetyl-alpha-D-glucosamine 1-phosphate: step 1/1. It participates in bacterial outer membrane biogenesis; LPS lipid A biosynthesis. Functionally, catalyzes the last two sequential reactions in the de novo biosynthetic pathway for UDP-N-acetylglucosamine (UDP-GlcNAc). The C-terminal domain catalyzes the transfer of acetyl group from acetyl coenzyme A to glucosamine-1-phosphate (GlcN-1-P) to produce N-acetylglucosamine-1-phosphate (GlcNAc-1-P), which is converted into UDP-GlcNAc by the transfer of uridine 5-monophosphate (from uridine 5-triphosphate), a reaction catalyzed by the N-terminal domain. In Nitrosospira multiformis (strain ATCC 25196 / NCIMB 11849 / C 71), this protein is Bifunctional protein GlmU.